Consider the following 516-residue polypeptide: ADP-ribosylation factor GTPase-activating protein 3 (516 aa).

In terms of domain architecture, Arf-GAP spans 10–126; the sequence is LTIFKRLRSV…IKSLASQATR (117 aa). The segment at 25-48 adopts a C4-type zinc-finger fold; sequence CFDCGAKNPSWASITYGVFLCIDC. The segment at 170–199 is disordered; the sequence is AEPSSLTSRPVETTLENNEGGQEQGPSVEG. A compositionally biased stretch (polar residues) spans 173-194; that stretch reads SSLTSRPVETTLENNEGGQEQG. Position 231 is a phosphoserine (Ser231). A coiled-coil region spans residues 243 to 264; sequence NEIEKQAQAADKMKEQEDLAKA. Ser270, Ser274, Ser331, and Ser370 each carry phosphoserine. Positions 392–414 are disordered; the sequence is KTTGYSDRPTARRKPDYEPVENT. A phosphoserine mark is found at Ser428, Ser451, Ser453, Ser455, Ser457, and Ser458.

It is found in the cytoplasm. The protein localises to the golgi apparatus membrane. With respect to regulation, GAP activity stimulated by phosphatidylinositol 4,5-bisphosphate (PIP2). Its function is as follows. GTPase-activating protein (GAP) for ADP ribosylation factor 1 (ARF1). Hydrolysis of ARF1-bound GTP may lead to dissociation of coatomer from Golgi-derived membranes to allow fusion with target membranes. The chain is ADP-ribosylation factor GTPase-activating protein 3 from Macaca fascicularis (Crab-eating macaque).